The chain runs to 643 residues: tRNA 5-methylaminomethyl-2-thiouridine biosynthesis bifunctional protein MnmC (643 aa).

Residues 1-223 are tRNA (mnm(5)s(2)U34)-methyltransferase; the sequence is MPDRLVSATL…VDDRLVGDYA (223 aa). The segment at 247–643 is FAD-dependent cmnm(5)s(2)U34 oxidoreductase; it reads IGAGLAGCAV…LRARRVGSAG (397 aa).

The protein in the N-terminal section; belongs to the methyltransferase superfamily. tRNA (mnm(5)s(2)U34)-methyltransferase family. In the C-terminal section; belongs to the DAO family. The cofactor is FAD.

The protein resides in the cytoplasm. It catalyses the reaction 5-aminomethyl-2-thiouridine(34) in tRNA + S-adenosyl-L-methionine = 5-methylaminomethyl-2-thiouridine(34) in tRNA + S-adenosyl-L-homocysteine + H(+). Catalyzes the last two steps in the biosynthesis of 5-methylaminomethyl-2-thiouridine (mnm(5)s(2)U) at the wobble position (U34) in tRNA. Catalyzes the FAD-dependent demodification of cmnm(5)s(2)U34 to nm(5)s(2)U34, followed by the transfer of a methyl group from S-adenosyl-L-methionine to nm(5)s(2)U34, to form mnm(5)s(2)U34. This chain is tRNA 5-methylaminomethyl-2-thiouridine biosynthesis bifunctional protein MnmC, found in Burkholderia orbicola (strain MC0-3).